The following is a 99-amino-acid chain: Nucleoid-associated protein SSA_0326 (99 aa).

Low complexity predominate over residues 1-15; it reads MMNMQSMMKQAQKLQ. Positions 1–23 are disordered; sequence MMNMQSMMKQAQKLQKQMEKGQA.

It belongs to the YbaB/EbfC family. As to quaternary structure, homodimer.

Its subcellular location is the cytoplasm. The protein localises to the nucleoid. In terms of biological role, binds to DNA and alters its conformation. May be involved in regulation of gene expression, nucleoid organization and DNA protection. The protein is Nucleoid-associated protein SSA_0326 of Streptococcus sanguinis (strain SK36).